A 25-amino-acid polypeptide reads, in one-letter code: Antithrombin-III (25 aa).

Belongs to the serpin family. In terms of assembly, forms protease inhibiting heterodimer with TMPRSS7. Phosphorylated by FAM20C in the extracellular medium. Plasma.

Its subcellular location is the secreted. It is found in the extracellular space. Its function is as follows. Most important serine protease inhibitor in plasma that regulates the blood coagulation cascade. AT-III inhibits thrombin, matriptase-3/TMPRSS7, as well as factors IXa, Xa and XIa. Its inhibitory activity is greatly enhanced in the presence of heparin. This is Antithrombin-III (SERPINC1) from Mesocricetus auratus (Golden hamster).